The primary structure comprises 183 residues: UPF0397 protein VSAL_I1988 (183 aa).

5 consecutive transmembrane segments (helical) span residues 8-28 (VVVI…MFGI), 41-61 (AVLA…VGFI), 74-94 (VWLT…LFPI), 110-130 (FFIF…TSAF), and 147-167 (LCII…FILT).

Belongs to the UPF0397 family.

Its subcellular location is the cell membrane. This is UPF0397 protein VSAL_I1988 from Aliivibrio salmonicida (strain LFI1238) (Vibrio salmonicida (strain LFI1238)).